The chain runs to 245 residues: MVKPKYSRVLIKLSGEALAGEKGVGIDIPTVQTIAQEIKEVHDSGIEIALVIGGGNLWRGEPASKAGMDRVQADYTGMLGTVMNALVMADALQHAGVDTRVQTAIAMQQVAEPYIRGRALRHLQKGRIVIFAAGVGSPYFSTDTTSALRAAEIEADAILMAKNGVDGVYNDDPRKNADAIKFNELTHMEVLKRGLKIMDSTASSLSMDNDIDLVVFNLNESGNIKRVIFGEQIGTTVTSRISDSE.

ATP is bound at residue 12–15; sequence KLSG. Residues 20–25 are involved in allosteric activation by GTP; that stretch reads GEKGVG. A UMP-binding site is contributed by Gly54. Residues Gly55 and Arg59 each coordinate ATP. UMP-binding positions include Asp74 and 135–142; that span reads VGSPYFST. The ATP site is built by Asn163, Tyr169, and Asp172.

The protein belongs to the UMP kinase family. In terms of assembly, homohexamer.

It localises to the cytoplasm. The enzyme catalyses UMP + ATP = UDP + ADP. Its pathway is pyrimidine metabolism; CTP biosynthesis via de novo pathway; UDP from UMP (UMPK route): step 1/1. With respect to regulation, allosterically activated by GTP. Inhibited by UTP. Functionally, catalyzes the reversible phosphorylation of UMP to UDP. This chain is Uridylate kinase, found in Streptococcus mutans serotype c (strain ATCC 700610 / UA159).